The sequence spans 329 residues: Ribonucleoside-diphosphate reductase subunit beta (329 aa).

Residues Asp-66, Glu-97, and His-101 each contribute to the Fe cation site. The active site involves Tyr-105. Positions 164, 198, and 201 each coordinate Fe cation.

Belongs to the ribonucleoside diphosphate reductase small chain family. As to quaternary structure, tetramer of two alpha and two beta subunits. The cofactor is Fe cation.

The enzyme catalyses a 2'-deoxyribonucleoside 5'-diphosphate + [thioredoxin]-disulfide + H2O = a ribonucleoside 5'-diphosphate + [thioredoxin]-dithiol. Provides the precursors necessary for DNA synthesis. Catalyzes the biosynthesis of deoxyribonucleotides from the corresponding ribonucleotides. The polypeptide is Ribonucleoside-diphosphate reductase subunit beta (nrdF) (Bacillus subtilis (strain 168)).